Consider the following 364-residue polypeptide: Aminomethyltransferase (364 aa).

The protein belongs to the GcvT family. The glycine cleavage system is composed of four proteins: P, T, L and H.

The catalysed reaction is N(6)-[(R)-S(8)-aminomethyldihydrolipoyl]-L-lysyl-[protein] + (6S)-5,6,7,8-tetrahydrofolate = N(6)-[(R)-dihydrolipoyl]-L-lysyl-[protein] + (6R)-5,10-methylene-5,6,7,8-tetrahydrofolate + NH4(+). Functionally, the glycine cleavage system catalyzes the degradation of glycine. In Escherichia coli O127:H6 (strain E2348/69 / EPEC), this protein is Aminomethyltransferase.